We begin with the raw amino-acid sequence, 299 residues long: Neomycin C epimerase (299 aa).

Residues 10 to 222 form the Radical SAM core domain; the sequence is PVRQVRAYRN…WNHIFETGRR (213 aa). Residues C26, C30, C33, C226, and C247 each contribute to the [4Fe-4S] cluster site. C249 (proton donor) is an active-site residue. Residues C271 and C274 each contribute to the [4Fe-4S] cluster site.

This sequence belongs to the radical SAM superfamily. Requires [4Fe-4S] cluster as cofactor.

The catalysed reaction is neomycin C + AH2 + S-adenosyl-L-methionine = neomycin B + 5'-deoxyadenosine + L-methionine + A + H(+). The protein operates within antibiotic biosynthesis; neomycin biosynthesis. Catalyzes the last step of neomycin B biosynthesis, i.e. the irreversible epimerization at C-5''' of neomycin C to give neomycin B. To a lesser extent, is also able to convert neomycin Y2 to neomycin Y1. The polypeptide is Neomycin C epimerase (Streptomyces fradiae (Streptomyces roseoflavus)).